The following is a 185-amino-acid chain: Threonylcarbamoyl-AMP synthase (185 aa).

In terms of domain architecture, YrdC-like spans 3 to 185 (EQAPAEVKQV…IDAISGKILR (183 aa)).

It belongs to the SUA5 family. TsaC subfamily.

Its subcellular location is the cytoplasm. It carries out the reaction L-threonine + hydrogencarbonate + ATP = L-threonylcarbamoyladenylate + diphosphate + H2O. Functionally, required for the formation of a threonylcarbamoyl group on adenosine at position 37 (t(6)A37) in tRNAs that read codons beginning with adenine. Catalyzes the conversion of L-threonine, HCO(3)(-)/CO(2) and ATP to give threonylcarbamoyl-AMP (TC-AMP) as the acyladenylate intermediate, with the release of diphosphate. The chain is Threonylcarbamoyl-AMP synthase from Shewanella woodyi (strain ATCC 51908 / MS32).